The following is a 476-amino-acid chain: Raffinose invertase (476 aa).

Substrate-binding positions include 35–38 (WMND), glutamine 54, 97–98 (FS), 159–160 (RD), glutamate 214, and tryptophan 297. Residue aspartate 38 is part of the active site.

Belongs to the glycosyl hydrolase 32 family. Homodimer.

The catalysed reaction is Hydrolysis of terminal non-reducing beta-D-fructofuranoside residues in beta-D-fructofuranosides.. In terms of biological role, may prevent the potential hasard of excessive sucrose accumulation. This is Raffinose invertase (rafD) from Escherichia coli.